The sequence spans 133 residues: Small ribosomal subunit protein uS8 (133 aa).

It belongs to the universal ribosomal protein uS8 family. As to quaternary structure, part of the 30S ribosomal subunit. Contacts proteins S5 and S12.

Its function is as follows. One of the primary rRNA binding proteins, it binds directly to 16S rRNA central domain where it helps coordinate assembly of the platform of the 30S subunit. This is Small ribosomal subunit protein uS8 from Acaryochloris marina (strain MBIC 11017).